A 152-amino-acid chain; its full sequence is Perlwapin (152 aa).

Positions 1 to 18 (LILCVVVCTAAVLGTAAG) are cleaved as a signal peptide. The WAP 1 domain occupies 19 to 61 (YESQLPGCPPGAYPAICARYCYSDRDCASGYYCCNTGCLNICV). Cystine bridges form between cysteine 26–cysteine 52, cysteine 35–cysteine 56, cysteine 39–cysteine 51, cysteine 45–cysteine 60, cysteine 69–cysteine 95, cysteine 77–cysteine 100, cysteine 82–cysteine 94, cysteine 88–cysteine 103, cysteine 112–cysteine 139, cysteine 122–cysteine 142, cysteine 126–cysteine 138, and cysteine 132–cysteine 146. One can recognise a WAP 2; atypical domain in the interval 62-107 (PKPKPGLCPSITQSPCRGNVCNNDQDCPGNRKCCGKPGCKRCYRPK). The WAP 3 domain maps to 108 to 150 (KPGSCPARKYEAGPCVVYCDGDFDCPGDKKCCGGCPRLCEKPC).

As to expression, component of the acid-soluble and acid-insoluble organic matrix of prismatic shell layers (at protein level).

It localises to the secreted. Its function is as follows. Inhibits growth of calcium carbonate crystals. May inhibit growth of certain crystallographic planes in the mineral phase of nacre in the shell. This chain is Perlwapin, found in Haliotis asinina (Donkey's ear abalone).